A 315-amino-acid polypeptide reads, in one-letter code: MTLDQLRIASRRSQLAMVQTNWVRDELQRAHPDLAITIEAMATQGDKILDVALAKIGDKGLFTKELEAQMLLGHAEIAVHSLKDLPTNLPEGLILGCITEREDPSDALVVNEKNQIHKLETLPEGSVVGTSSLRRLAQLRYHYPHLVFKDVRGNVITRLEKLDSGEYDCLILAAAGLQRLGFANRIHQLIPTDISLHAVGQGALGIECVSGQQKVLDILKTLEHESTSKRCLAERSFLRELEGGCQVPIGVRTEINNNELILEGMVASLDGKRLIRDIKKGSVSSAEEIGIDLANELKGRGAGEILEEIFKSARA.

C245 is subject to S-(dipyrrolylmethanemethyl)cysteine.

It belongs to the HMBS family. In terms of assembly, monomer. Dipyrromethane serves as cofactor.

The enzyme catalyses 4 porphobilinogen + H2O = hydroxymethylbilane + 4 NH4(+). Its pathway is porphyrin-containing compound metabolism; protoporphyrin-IX biosynthesis; coproporphyrinogen-III from 5-aminolevulinate: step 2/4. It participates in porphyrin-containing compound metabolism; chlorophyll biosynthesis. Tetrapolymerization of the monopyrrole PBG into the hydroxymethylbilane pre-uroporphyrinogen in several discrete steps. The polypeptide is Porphobilinogen deaminase (Prochlorococcus marinus (strain NATL1A)).